A 166-amino-acid chain; its full sequence is Small ribosomal subunit protein uS4 (166 aa).

The 63-residue stretch at 103–165 folds into the S4 RNA-binding domain; that stretch reads RRLQTVVYKK…PTSPYFKKAQ (63 aa).

This sequence belongs to the universal ribosomal protein uS4 family. Part of the 30S ribosomal subunit. Contacts protein S5. The interaction surface between S4 and S5 is involved in control of translational fidelity.

Functionally, one of the primary rRNA binding proteins, it binds directly to 16S rRNA where it nucleates assembly of the body of the 30S subunit. With S5 and S12 plays an important role in translational accuracy. This chain is Small ribosomal subunit protein uS4, found in Ignicoccus hospitalis (strain KIN4/I / DSM 18386 / JCM 14125).